The primary structure comprises 297 residues: 1D-myo-inositol 2-acetamido-2-deoxy-alpha-D-glucopyranoside deacetylase (297 aa).

Residues His-14, Asp-17, and His-149 each contribute to the Zn(2+) site.

Belongs to the MshB deacetylase family. Requires Zn(2+) as cofactor.

It carries out the reaction 1D-myo-inositol 2-acetamido-2-deoxy-alpha-D-glucopyranoside + H2O = 1D-myo-inositol 2-amino-2-deoxy-alpha-D-glucopyranoside + acetate. Functionally, catalyzes the deacetylation of 1D-myo-inositol 2-acetamido-2-deoxy-alpha-D-glucopyranoside (GlcNAc-Ins) in the mycothiol biosynthesis pathway. The protein is 1D-myo-inositol 2-acetamido-2-deoxy-alpha-D-glucopyranoside deacetylase of Thermomonospora curvata (strain ATCC 19995 / DSM 43183 / JCM 3096 / KCTC 9072 / NBRC 15933 / NCIMB 10081 / Henssen B9).